The chain runs to 273 residues: 2,3,4,5-tetrahydropyridine-2,6-dicarboxylate N-succinyltransferase (273 aa).

2 residues coordinate substrate: arginine 104 and aspartate 141.

It belongs to the transferase hexapeptide repeat family. Homotrimer.

It localises to the cytoplasm. It catalyses the reaction (S)-2,3,4,5-tetrahydrodipicolinate + succinyl-CoA + H2O = (S)-2-succinylamino-6-oxoheptanedioate + CoA. It participates in amino-acid biosynthesis; L-lysine biosynthesis via DAP pathway; LL-2,6-diaminopimelate from (S)-tetrahydrodipicolinate (succinylase route): step 1/3. This is 2,3,4,5-tetrahydropyridine-2,6-dicarboxylate N-succinyltransferase from Aromatoleum aromaticum (strain DSM 19018 / LMG 30748 / EbN1) (Azoarcus sp. (strain EbN1)).